The sequence spans 145 residues: Secreted RxLR effector protein 43 (145 aa).

An N-terminal signal peptide occupies residues 1 to 20 (MKVTMALAALCVALQAPCIG). The RxLR motif lies at 31–34 (RHLR).

It belongs to the RxLR effector family.

Its subcellular location is the secreted. The protein resides in the host nucleus. The protein localises to the host cytoplasm. Functionally, secreted effector that completely suppresses the host cell death induced by cell death-inducing proteins. In Plasmopara viticola (Downy mildew of grapevine), this protein is Secreted RxLR effector protein 43.